The sequence spans 547 residues: MSTASSSSSSSSSQTPHPPSQRMRRSAAGSPPAVAAAGSGNGAGGGGGVGCAPAAGAGRLLQPIRATVPYQLLRGSQHSPTRPPVAAAAASLGSLPGPGAARGPSPSSPTPPAAAAPAEQAPRAKGRPRRSPESHRRSSSPERRSPGSPVCRADKAKSQQVRTSSTIRRTSSLDTITGPYLTGQWPRDPHVHYPSCMKDKATQTPSCWAEEGAEKRSHQRSASWGSADQLKEQIAKLRQQLQRSKQSSRHSKEKDRQSPLHGNHITISHTQATGSRSVPMPLSNISVPKSSVSRVPCNVEGISPELEKVFIKENNGKEEVSKPLDIPDGRRAPLPAHYRSSSTRSIDTQTPSVQERSSSCSSHSPCVSPFCPPESQDGSPCSTEDLLYDRDKDSGSSSPLPKYASSPKPNNSYMFKREPPEGCERVKVFEEMASRQPISAPLFSCPDKNKVNFIPTGSAFCPVKLLGPLLPASDLMLKNSPNSGQSSALATLTVEQLSSRVSFTSLSDDTSTAGSMEASVQQPSQQQQLLQELQGEDHISAQNYVII.

Residues 1–13 (MSTASSSSSSSSS) show a composition bias toward low complexity. 2 disordered regions span residues 1–55 (MSTA…APAA) and 72–285 (LLRG…LSNI). Serine 20 carries the post-translational modification Phosphoserine. Residues 26-38 (SAAGSPPAVAAAG) are compositionally biased toward low complexity. The span at 39–50 (SGNGAGGGGGVG) shows a compositional bias: gly residues. 4 positions are modified to phosphoserine: serine 79, serine 105, serine 107, and serine 108. Residues 86-105 (AAAAASLGSLPGPGAARGPS) show a composition bias toward low complexity. Threonine 110 is modified (phosphothreonine). A compositionally biased stretch (basic and acidic residues) spans 130 to 145 (RSPESHRRSSSPERRS). Residues 162–177 (RTSSTIRRTSSLDTIT) are compositionally biased toward low complexity. 2 positions are modified to phosphoserine: serine 171 and serine 172. A phosphothreonine mark is found at threonine 175 and threonine 177. Residues 187-201 (RDPHVHYPSCMKDKA) are compositionally biased toward basic and acidic residues. At serine 223 the chain carries Phosphoserine. Residues 225-254 (GSADQLKEQIAKLRQQLQRSKQSSRHSKEK) are a coiled coil. Low complexity predominate over residues 236-245 (KLRQQLQRSK). A Phosphoserine modification is found at serine 258. The span at 265–276 (ITISHTQATGSR) shows a compositional bias: polar residues. At threonine 266 the chain carries Phosphothreonine. Position 303 is a phosphoserine (serine 303). Over residues 319-331 (EVSKPLDIPDGRR) the composition is skewed to basic and acidic residues. Residues 319–417 (EVSKPLDIPD…KPNNSYMFKR (99 aa)) are disordered. Polar residues predominate over residues 339 to 356 (RSSSTRSIDTQTPSVQER). Threonine 343 is modified (phosphothreonine). Serine 345 bears the Phosphoserine mark. Residue threonine 350 is modified to Phosphothreonine. A compositionally biased stretch (low complexity) spans 357 to 369 (SSSCSSHSPCVSP). 5 positions are modified to phosphoserine: serine 394, serine 398, serine 406, serine 412, and serine 480. Over residues 505-520 (SLSDDTSTAGSMEASV) the composition is skewed to polar residues. Positions 505 to 530 (SLSDDTSTAGSMEASVQQPSQQQQLL) are disordered. Positions 521–530 (QQPSQQQQLL) are enriched in low complexity.

As to expression, predominantly expressed in lung, spleen, thymus and testis and, at lower levels, in brain, bone marrow, peripheral leukocytes, skin and trachea.

This Homo sapiens (Human) protein is Glucocorticoid-induced transcript 1 protein (GLCCI1).